Reading from the N-terminus, the 501-residue chain is ATP synthase subunit alpha (501 aa).

An ATP-binding site is contributed by 169–176; the sequence is GDRQTGKT.

The protein belongs to the ATPase alpha/beta chains family. As to quaternary structure, F-type ATPases have 2 components, CF(1) - the catalytic core - and CF(0) - the membrane proton channel. CF(1) has five subunits: alpha(3), beta(3), gamma(1), delta(1), epsilon(1). CF(0) has three main subunits: a(1), b(2) and c(9-12). The alpha and beta chains form an alternating ring which encloses part of the gamma chain. CF(1) is attached to CF(0) by a central stalk formed by the gamma and epsilon chains, while a peripheral stalk is formed by the delta and b chains.

The protein resides in the cell membrane. It carries out the reaction ATP + H2O + 4 H(+)(in) = ADP + phosphate + 5 H(+)(out). Functionally, produces ATP from ADP in the presence of a proton gradient across the membrane. The alpha chain is a regulatory subunit. The sequence is that of ATP synthase subunit alpha from Streptococcus pneumoniae serotype 4 (strain ATCC BAA-334 / TIGR4).